Reading from the N-terminus, the 328-residue chain is Sulfate adenylyltransferase subunit 2 (328 aa).

2 disordered regions span residues 15-34 (AAPDLADLGGEPARARPSSH) and 304-328 (SEREGRVIDRDSTASMERKKAEGYF).

The protein belongs to the PAPS reductase family. CysD subfamily. As to quaternary structure, heterodimer composed of CysD, the smaller subunit, and CysN.

It catalyses the reaction sulfate + ATP + H(+) = adenosine 5'-phosphosulfate + diphosphate. Its pathway is sulfur metabolism; hydrogen sulfide biosynthesis; sulfite from sulfate: step 1/3. In terms of biological role, with CysN forms the ATP sulfurylase (ATPS) that catalyzes the adenylation of sulfate producing adenosine 5'-phosphosulfate (APS) and diphosphate, the first enzymatic step in sulfur assimilation pathway. APS synthesis involves the formation of a high-energy phosphoric-sulfuric acid anhydride bond driven by GTP hydrolysis by CysN coupled to ATP hydrolysis by CysD. This is Sulfate adenylyltransferase subunit 2 from Rhodopseudomonas palustris (strain BisA53).